Here is a 359-residue protein sequence, read N- to C-terminus: MQTLTVDLGDRSYPIHIGAALLTRADLVLPHLAQKRVMVVTNTTVGPLYLAQLKAALEAAGVRVAEVVLPDGEAYKNWETLNLVFDALLRERAERKTTLIALGGGVIGDMTGFAAACYQRGVPFIQIPTTLLSQVDSSVGGKTGINHPLGKNMIGAFYQPKLVLADAATLGTLPARELSAGLAEVIKYGLIWDVEFLAWLEANMDRLRALDAEAISHAIYRSCEIKAQVVAEDEREGGLRAILNLGHTFGHAIETGMGYGAWLHGEAVAAGMVLAAETSQRLGWLGEADVARTRALIRAAGLPDVAPNLGVDAYLEYMGHDKKVEGGKMRFVLLKKLGEAVITDAVPADVLTAVLTPPH.

NAD(+) contacts are provided by residues 71–76 (DGEAYK), 105–109 (GVIGD), 129–130 (TT), lysine 142, lysine 151, and 169–172 (TLGT). Zn(2+) contacts are provided by glutamate 184, histidine 247, and histidine 264.

It belongs to the sugar phosphate cyclases superfamily. Dehydroquinate synthase family. Co(2+) serves as cofactor. Zn(2+) is required as a cofactor. Requires NAD(+) as cofactor.

It localises to the cytoplasm. It catalyses the reaction 7-phospho-2-dehydro-3-deoxy-D-arabino-heptonate = 3-dehydroquinate + phosphate. It functions in the pathway metabolic intermediate biosynthesis; chorismate biosynthesis; chorismate from D-erythrose 4-phosphate and phosphoenolpyruvate: step 2/7. Its function is as follows. Catalyzes the conversion of 3-deoxy-D-arabino-heptulosonate 7-phosphate (DAHP) to dehydroquinate (DHQ). The chain is 3-dehydroquinate synthase from Thiobacillus denitrificans (strain ATCC 25259 / T1).